We begin with the raw amino-acid sequence, 172 residues long: Large ribosomal subunit protein uL11m (172 aa).

This sequence belongs to the universal ribosomal protein uL11 family.

The protein localises to the mitochondrion. The polypeptide is Large ribosomal subunit protein uL11m (mrpl11) (Dictyostelium discoideum (Social amoeba)).